The primary structure comprises 834 residues: Translation initiation factor IF-2 (834 aa).

Positions M1 to Q247 are disordered. A compositionally biased stretch (low complexity) spans G45–R101. Over residues P109 to Q125 the composition is skewed to basic and acidic residues. Low complexity-rich tracts occupy residues A149 to P165 and A173 to N201. A compositionally biased stretch (basic residues) spans G224–A233. The 170-residue stretch at S335–K504 folds into the tr-type G domain. The segment at G344–T351 is G1. Residue G344–T351 coordinates GTP. A G2 region spans residues G369–H373. The interval D390–G393 is G3. GTP contacts are provided by residues D390–H394 and N444–D447. Residues N444–D447 are G4. The interval S480–K482 is G5.

It belongs to the TRAFAC class translation factor GTPase superfamily. Classic translation factor GTPase family. IF-2 subfamily.

It is found in the cytoplasm. In terms of biological role, one of the essential components for the initiation of protein synthesis. Protects formylmethionyl-tRNA from spontaneous hydrolysis and promotes its binding to the 30S ribosomal subunits. Also involved in the hydrolysis of GTP during the formation of the 70S ribosomal complex. This is Translation initiation factor IF-2 from Leuconostoc mesenteroides subsp. mesenteroides (strain ATCC 8293 / DSM 20343 / BCRC 11652 / CCM 1803 / JCM 6124 / NCDO 523 / NBRC 100496 / NCIMB 8023 / NCTC 12954 / NRRL B-1118 / 37Y).